The chain runs to 670 residues: MGDLEKGAATHGAGCFAKIKVFLMALTCAYVSKSLSGTFMSSMLTQIERQFGIPTAIVGFINGSFEIGNLLLIIFVSYFGMKLHRPIVIGVGCAVMGLGCFIISLPHFLMGRYEYETTILPTSNLSSNSFLCMENQTQTLNPAQDPAECVKEVKSLMWIYVLVGNIIRGIGETPIMPLGVSYIENFAKSENSPLYIGILETGKMIGPIFGLLLGSFCASIYVDTGSVNTDDLTITPTDIRWVGAWWIGFLVCAGVNILISIPFFFFPKTLPKEGLQENVDGTENAKEESTEKRPRKKNRGITKDFFPFLKSPVLQPDLHAVHPYKVLQVNAFNIYFSFLPKYLENQYGKSTAEVIFLMGVYNLPAICIGYLIAGFMMKKFKITVKTAAFLAFCLSLSEYSFGFCNFLITCDNVPVAGLTNSYERDQKPLYLENNVLADCNTRCSCLTKTWDPVCGDNGLAYMSACLAGCEKSVGTGTNMVFHNCSCIQSPGNSSAVLGLCNKGPECTNKLQYLLILSGFLSILYSFAAIPGYMVFLRCIKSEEKSLGIGIHAFCIRVFAGIPAPIYFGALIDRTCLHWGTQKCGAPGACRMYDINSFRRIYLGMSAALRGSSYLPAFVIVILTRKFSLPGKINSSEMEIAEMKLTEKESQCTDVHRNPKFKNDGELKTKL.

At 1-20 (MGDLEKGAATHGAGCFAKIK) the chain is on the cytoplasmic side. Residues 21–40 (VFLMALTCAYVSKSLSGTFM) traverse the membrane as a helical segment. Topologically, residues 41–59 (SSMLTQIERQFGIPTAIVG) are extracellular. Residues 60–80 (FINGSFEIGNLLLIIFVSYFG) traverse the membrane as a helical segment. The Cytoplasmic segment spans residues 81–86 (MKLHRP). The chain crosses the membrane as a helical span at residues 87–111 (IVIGVGCAVMGLGCFIISLPHFLMG). The Extracellular portion of the chain corresponds to 112-155 (RYEYETTILPTSNLSSNSFLCMENQTQTLNPAQDPAECVKEVKS). Asn124 and Asn135 each carry an N-linked (GlcNAc...) asparagine glycan. A helical transmembrane segment spans residues 156-184 (LMWIYVLVGNIIRGIGETPIMPLGVSYIE). Topologically, residues 185–203 (NFAKSENSPLYIGILETGK) are cytoplasmic. The helical transmembrane segment at 204 to 224 (MIGPIFGLLLGSFCASIYVDT) threads the bilayer. The Extracellular portion of the chain corresponds to 225-242 (GSVNTDDLTITPTDIRWV). A helical transmembrane segment spans residues 243 to 267 (GAWWIGFLVCAGVNILISIPFFFFP). Residues 268–311 (KTLPKEGLQENVDGTENAKEESTEKRPRKKNRGITKDFFPFLKS) are Cytoplasmic-facing. Residues 277–296 (ENVDGTENAKEESTEKRPRK) are disordered. Residues 283-292 (ENAKEESTEK) are compositionally biased toward basic and acidic residues. The chain crosses the membrane as a helical span at residues 312–333 (PVLQPDLHAVHPYKVLQVNAFN). Over 334–353 (IYFSFLPKYLENQYGKSTAE) the chain is Extracellular. A helical membrane pass occupies residues 354–377 (VIFLMGVYNLPAICIGYLIAGFMM). Residues 378-381 (KKFK) lie on the Cytoplasmic side of the membrane. A helical membrane pass occupies residues 382 to 405 (ITVKTAAFLAFCLSLSEYSFGFCN). The Extracellular portion of the chain corresponds to 406–513 (FLITCDNVPV…PECTNKLQYL (108 aa)). One can recognise a Kazal-like domain in the interval 433–488 (NNVLADCNTRCSCLTKTWDPVCGDNGLAYMSACLAGCEKSVGTGTNMVFHNCSCIQ). 3 cysteine pairs are disulfide-bonded: Cys439-Cys469, Cys445-Cys465, and Cys454-Cys486. N-linked (GlcNAc...) asparagine glycosylation is found at Asn483 and Asn492. The helical transmembrane segment at 514-536 (LILSGFLSILYSFAAIPGYMVFL) threads the bilayer. Residues 537 to 545 (RCIKSEEKS) lie on the Cytoplasmic side of the membrane. A helical membrane pass occupies residues 546 to 571 (LGIGIHAFCIRVFAGIPAPIYFGALI). The Extracellular segment spans residues 572-605 (DRTCLHWGTQKCGAPGACRMYDINSFRRIYLGMS). Residues 606–623 (AALRGSSYLPAFVIVILT) form a helical membrane-spanning segment. Residues 624–670 (RKFSLPGKINSSEMEIAEMKLTEKESQCTDVHRNPKFKNDGELKTKL) are Cytoplasmic-facing.

The protein belongs to the organo anion transporter (TC 2.A.60) family. All isoforms are detected in kidney, and many are kidney specific. Isoforms 2 and 13 are also detected in liver. Isoforms 4 and 9/K4 are ubiquitous, but isoform 9/K13 is kidney specific. Isoforms 5 and 14 are detected in all tissues tested, with the exception of pancreas and spleen. Isoforms 11 and 15 are detected in kidney, pancreas and testis. Isoform 7 is detected in kidney, liver, testis and spleen.

The protein localises to the cell membrane. Mediates the Na(+)-independent transport of organic anions such as methotrexate, taurocholate, folate and prostaglandin E2. May contribute to renal secretion and/or reabsorption of hydrophobic anionic compounds. Mediates renal clearance of methotrexate from the blood. The polypeptide is Solute carrier organic anion transporter family member 1A3 (Slco1a3) (Rattus norvegicus (Rat)).